Here is a 231-residue protein sequence, read N- to C-terminus: Octanoyl-[acyl-carrier-protein]:protein N-octanoyltransferase LIPT2, mitochondrial (231 aa).

The N-terminal 31 residues, M1–Q31, are a transit peptide targeting the mitochondrion. The 184-residue stretch at G41 to L224 folds into the BPL/LPL catalytic domain. Residues R85 to H92, A154 to G156, and G167 to A169 each bind substrate. Catalysis depends on C185, which acts as the Acyl-thioester intermediate.

Belongs to the LipB family.

The protein localises to the mitochondrion. It carries out the reaction octanoyl-[ACP] + L-lysyl-[protein] = N(6)-octanoyl-L-lysyl-[protein] + holo-[ACP] + H(+). The protein operates within protein modification; protein lipoylation via endogenous pathway; protein N(6)-(lipoyl)lysine from octanoyl-[acyl-carrier-protein]: step 1/2. In terms of biological role, catalyzes the transfer of endogenously produced octanoic acid from octanoyl-acyl-carrier-protein (octanoyl-ACP) onto the lipoyl domains of lipoate-dependent enzymes such as the protein H of the glycine cleavage system (GCSH). Lipoyl-ACP can also act as a substrate although octanoyl-ACP is likely to be the physiological substrate. In Homo sapiens (Human), this protein is Octanoyl-[acyl-carrier-protein]:protein N-octanoyltransferase LIPT2, mitochondrial.